We begin with the raw amino-acid sequence, 295 residues long: Protease HtpX homolog (295 aa).

2 consecutive transmembrane segments (helical) span residues 6–26 and 40–60; these read IGLF…VTSV and LSSL…VSLL. His-148 is a Zn(2+) binding site. Residue Glu-149 is part of the active site. Residue His-152 participates in Zn(2+) binding. Helical transmembrane passes span 163–183 and 198–218; these read LIQG…SYAL and IANI…VAYF. Glu-223 contributes to the Zn(2+) binding site.

Belongs to the peptidase M48B family. Zn(2+) serves as cofactor.

It localises to the cell inner membrane. This chain is Protease HtpX homolog, found in Leptospira interrogans serogroup Icterohaemorrhagiae serovar copenhageni (strain Fiocruz L1-130).